Here is a 56-residue protein sequence, read N- to C-terminus: Ovomucoid (56 aa).

Positions 6–56 (VDCSDHPKPACLQEQKPLCGSDNKTYDNKCSFCNAVVDSNGTLTLSHFGKC) constitute a Kazal-like domain. 3 cysteine pairs are disulfide-bonded: cysteine 8/cysteine 38, cysteine 16/cysteine 35, and cysteine 24/cysteine 56. N-linked (GlcNAc...) asparagine glycosylation occurs at asparagine 45.

Its subcellular location is the secreted. The chain is Ovomucoid from Pipile pipile (Trinidad piping guan).